The chain runs to 295 residues: uncharacterized protein (295 aa).

The region spanning 1 to 58 is the HTH lysR-type domain; the sequence is MESGDLRVFQMVAREGTITKAALQLGYVQSNVTARIQQLEAELGTTLFLRHNRGMTLS. A DNA-binding region (H-T-H motif) is located at residues 18–37; the sequence is ITKAALQLGYVQSNVTARIQ.

It belongs to the LysR transcriptional regulatory family.

This is an uncharacterized protein from Bacillus subtilis (strain 168).